Consider the following 125-residue polypeptide: MKHQKRVLKFNRSGSHRDAMVKNMMIALILNHIIKTTLSKAKILRQFIEPVITRAKINTIANRRLIFAKIRNTDSVIKLFTQIGPHFYDRPGGYTRILKCGFRKGDNAPMAYIELVDRSKLVIKS.

The protein belongs to the bacterial ribosomal protein bL17 family. Part of the 50S ribosomal subunit. Contacts protein L32.

In Blochmanniella floridana, this protein is Large ribosomal subunit protein bL17.